Consider the following 98-residue polypeptide: NADH-ubiquinone oxidoreductase chain 4L (98 aa).

3 consecutive transmembrane segments (helical) span residues 1–21 (MPVV…GLLI), 29–49 (SLLC…VTVL), and 61–81 (IILL…LVMV).

It belongs to the complex I subunit 4L family. Core subunit of respiratory chain NADH dehydrogenase (Complex I) which is composed of 45 different subunits.

It localises to the mitochondrion inner membrane. The enzyme catalyses a ubiquinone + NADH + 5 H(+)(in) = a ubiquinol + NAD(+) + 4 H(+)(out). In terms of biological role, core subunit of the mitochondrial membrane respiratory chain NADH dehydrogenase (Complex I) which catalyzes electron transfer from NADH through the respiratory chain, using ubiquinone as an electron acceptor. Part of the enzyme membrane arm which is embedded in the lipid bilayer and involved in proton translocation. This is NADH-ubiquinone oxidoreductase chain 4L (MT-ND4L) from Ursus americanus (American black bear).